We begin with the raw amino-acid sequence, 361 residues long: Phospho-N-acetylmuramoyl-pentapeptide-transferase (361 aa).

A run of 10 helical transmembrane segments spans residues 26-46, 73-93, 98-118, 139-159, 168-188, 200-220, 237-257, 264-284, 289-309, and 339-359; these read SILA…VLIQ, TMGG…WGDL, VWLV…DDWI, IFGL…AAVT, IALP…IVGF, GLAI…AYAS, AGDL…FLWF, VFMG…IAVI, LVLV…IIQV, and VIVR…ATLK.

Belongs to the glycosyltransferase 4 family. MraY subfamily. Mg(2+) is required as a cofactor.

It localises to the cell inner membrane. The catalysed reaction is UDP-N-acetyl-alpha-D-muramoyl-L-alanyl-gamma-D-glutamyl-meso-2,6-diaminopimeloyl-D-alanyl-D-alanine + di-trans,octa-cis-undecaprenyl phosphate = di-trans,octa-cis-undecaprenyl diphospho-N-acetyl-alpha-D-muramoyl-L-alanyl-D-glutamyl-meso-2,6-diaminopimeloyl-D-alanyl-D-alanine + UMP. It functions in the pathway cell wall biogenesis; peptidoglycan biosynthesis. Functionally, catalyzes the initial step of the lipid cycle reactions in the biosynthesis of the cell wall peptidoglycan: transfers peptidoglycan precursor phospho-MurNAc-pentapeptide from UDP-MurNAc-pentapeptide onto the lipid carrier undecaprenyl phosphate, yielding undecaprenyl-pyrophosphoryl-MurNAc-pentapeptide, known as lipid I. The sequence is that of Phospho-N-acetylmuramoyl-pentapeptide-transferase from Xylella fastidiosa (strain M12).